Reading from the N-terminus, the 458-residue chain is Exodeoxyribonuclease 7 large subunit (458 aa).

Belongs to the XseA family. As to quaternary structure, heterooligomer composed of large and small subunits.

The protein resides in the cytoplasm. It carries out the reaction Exonucleolytic cleavage in either 5'- to 3'- or 3'- to 5'-direction to yield nucleoside 5'-phosphates.. Bidirectionally degrades single-stranded DNA into large acid-insoluble oligonucleotides, which are then degraded further into small acid-soluble oligonucleotides. The polypeptide is Exodeoxyribonuclease 7 large subunit (Geobacter sp. (strain M21)).